Reading from the N-terminus, the 932-residue chain is Protein translocase subunit SecA (932 aa).

ATP-binding positions include glutamine 87, 105-109, and aspartate 515; that span reads GEGKT. Zn(2+)-binding residues include cysteine 916, cysteine 918, cysteine 927, and histidine 928.

This sequence belongs to the SecA family. As to quaternary structure, monomer and homodimer. Part of the essential Sec protein translocation apparatus which comprises SecA, SecYEG and auxiliary proteins SecDF-YajC and YidC. Requires Zn(2+) as cofactor.

The protein localises to the cell inner membrane. It is found in the cytoplasm. The catalysed reaction is ATP + H2O + cellular proteinSide 1 = ADP + phosphate + cellular proteinSide 2.. In terms of biological role, part of the Sec protein translocase complex. Interacts with the SecYEG preprotein conducting channel. Has a central role in coupling the hydrolysis of ATP to the transfer of proteins into and across the cell membrane, serving both as a receptor for the preprotein-SecB complex and as an ATP-driven molecular motor driving the stepwise translocation of polypeptide chains across the membrane. In Burkholderia orbicola (strain MC0-3), this protein is Protein translocase subunit SecA.